The chain runs to 260 residues: Neuraminyllactose-binding hemagglutinin (260 aa).

The first 27 residues, 1 to 27 (MKANNHFKDFAWKKCLLGASVVALLVG), serve as a signal peptide directing secretion. The N-palmitoyl cysteine moiety is linked to residue Cys28. Cys28 carries the S-diacylglycerol cysteine lipid modification.

Its subcellular location is the cell outer membrane. This is Neuraminyllactose-binding hemagglutinin (hpaA) from Helicobacter pylori (strain ATCC 700392 / 26695) (Campylobacter pylori).